Reading from the N-terminus, the 141-residue chain is Hemoglobin subunit alpha (141 aa).

Residues 1–141 (VLSPADKTNI…VSTVLTSKYR (141 aa)) form the Globin domain. Serine 3 is modified (phosphoserine). Lysine 7 is modified (N6-succinyllysine). Threonine 8 carries the phosphothreonine modification. Lysine 11 is modified (N6-succinyllysine). Lysine 16 carries the N6-acetyllysine; alternate modification. N6-succinyllysine; alternate is present on lysine 16. Position 24 is a phosphotyrosine (tyrosine 24). The residue at position 35 (serine 35) is a Phosphoserine. An N6-succinyllysine modification is found at lysine 40. Phosphoserine is present on serine 49. An O2-binding site is contributed by histidine 58. A heme b-binding site is contributed by histidine 87. Residue serine 102 is modified to Phosphoserine. Threonine 108 is subject to Phosphothreonine. Serine 124 carries the phosphoserine modification. Threonine 134 and threonine 137 each carry phosphothreonine. A Phosphoserine modification is found at serine 138.

The protein belongs to the globin family. In terms of assembly, heterotetramer of two alpha chains and two beta chains. In terms of tissue distribution, red blood cells.

Its function is as follows. Involved in oxygen transport from the lung to the various peripheral tissues. Hemopressin acts as an antagonist peptide of the cannabinoid receptor CNR1. Hemopressin-binding efficiently blocks cannabinoid receptor CNR1 and subsequent signaling. This Vulpes vulpes (Red fox) protein is Hemoglobin subunit alpha (HBA).